The following is a 452-amino-acid chain: Scaffold protein ILK (452 aa).

At methionine 1 the chain carries N-acetylmethionine. ANK repeat units follow at residues 2 to 30 (DDIFTQCREGNAVAVRLWLDNTENDLNQG), 31 to 63 (DDHGFSPLHWACREGRSAVVEMLIMRGARINVM), 64 to 96 (NRGDDTPLHLAASHGHRDIVQKLLQYKADINAV), 97 to 129 (NEHGNVPLHYACFWGQDQVAEDLVANGALVSIC), and 130 to 174 (NKYG…GTTR). Residues 33–139 (HGFSPLHWAC…NKYGEMPVDK (107 aa)) form an interaction with LIMS1 region. Threonine 173 bears the Phosphothreonine mark. Residues 180 to 212 (GTLNKHSGIDFKQLNFLAKLNENHSGELWKGRW) are PH-like; mediates interaction with TGFB1I1. Serine 186 is subject to Phosphoserine. A Protein kinase domain is found at 193 to 446 (LNFLAKLNEN…PKFDMIVPIL (254 aa)). Residues asparagine 200, asparagine 202, histidine 203, and serine 204 each contribute to the ATP site. At serine 246 the chain carries Phosphoserine. The ATP site is built by histidine 270, methionine 272, and asparagine 279. Aspartate 339 contacts Mg(2+). Lysine 341 contacts ATP. The short motif at 363–371 (KKPEDTNRR) is the Nuclear localization signal element. The residue at position 426 (lysine 426) is an N6-acetyllysine.

Belongs to the protein kinase superfamily. TKL Ser/Thr protein kinase family. As to quaternary structure, component of the heterotrimeric IPP (ILK-PINCH-PARVIN) complex composed of ILK, LIMS1/PINCH and PARVA; the complex binds to F-actin via the C-terminal tail of LIMS1 and the N-terminal region of PARVA, promoting F-actin filament bundling. Formation of the IPP complex is dependent on protein kinase C and precedes integrin-mediated cell adhesion and spreading. ILK also interacts with LIMS2/PINCH2 and with PARVB and PARVG which may substitute for LIMS1 and PARVA in the IPP complex; PARVA and PARVB compete for the same binding site. Interaction with PARVG promotes the establishment of cell polarity required for leukocyte migration. Interacts with the cytoplasmic domain of integrin ITGB1 and may also interact with integrins ITGB2, ITGB3 and/or ITGB5. Interacts probably also with TGFB1I1. Interacts (via ANK repeats) with EPHA1 (via SAM domain); stimulated by EFNA1 but independent of the kinase activity of EPHA1. Interacts with FERMT2. Interacts with LIMD2; leading to activate the protein kinase activity. Interacts with PXN/PAXILLIN (via LD motif 4). Interacts with CCDC25 (via cytoplasmic region); initiating the ILK-PARVB cascade to induce cytoskeleton rearrangement and directional migration of cells. Interacts with IQGAP1; the interaction is required for localization of IQGAP1 to the cell cortex. In terms of processing, phosphorylation by PAK1 modulates ILK subcellular location by promoting its nuclear export. As to expression, highly expressed in lung, heart, kidney, liver, brain, spleen and skeletal muscle. Weakly expressed in testis.

The protein resides in the cell junction. The protein localises to the focal adhesion. It localises to the cell membrane. Its subcellular location is the cytoplasm. It is found in the myofibril. The protein resides in the sarcomere. The protein localises to the cell projection. It localises to the lamellipodium. Its subcellular location is the nucleus. It is found in the cytoskeleton. The protein resides in the microtubule organizing center. The protein localises to the centrosome. It localises to the cell cortex. Scaffold protein which mediates protein-protein interactions during a range of cellular events including focal adhesion assembly, cell adhesion and cell migration. Regulates integrin-mediated signal transduction by contributing to inside-out integrin activation. Recruits PARVA and LIMS1/PITCH to form the heterotrimeric IPP (ILK-PINCH-PARVIN) complex which binds to F-actin via the C-terminal tail of LIMS1 and the N-terminal region of PARVA, promoting F-actin filament bundling, a process required to generate force for actin cytoskeleton reorganization and subsequent dynamic cell adhesion events such as cell spreading and migration. Binding to PARVA promotes effective assembly of ILK into focal adhesions while PARVA-bound ILK can simultaneously engage integrin-beta cytoplasmic tails to mediate cell adhesion. Plays a role with PARVG in promoting the cell adhesion and spreading of leukocytes. Acts as an upstream effector of both AKT1/PKB and GSK3. Mediates trafficking of caveolae to the cell surface in an ITGB1-dependent manner by promoting the recruitment of IQGAP1 to the cell cortex which cooperates with its effector DIAPH1 to locally stabilize microtubules and allow stable insertion of caveolae into the plasma membrane. Required for the maintenance of mitotic spindle integrity by promoting phosphorylation of TACC3 by AURKA. Associates with chromatin and may act as a negative regulator of transcription when located in the nucleus. The protein is Scaffold protein ILK of Mus musculus (Mouse).